The chain runs to 282 residues: NH(3)-dependent NAD(+) synthetase (282 aa).

51–58 (GISGGVDS) is a binding site for ATP. Asp57 serves as a coordination point for Mg(2+). Arg148 is a deamido-NAD(+) binding site. Position 168 (Thr168) interacts with ATP. Glu173 serves as a coordination point for Mg(2+). Deamido-NAD(+) is bound by residues Lys181 and Asp188. The ATP site is built by Lys197 and Thr219. 268 to 269 (HK) provides a ligand contact to deamido-NAD(+).

The protein belongs to the NAD synthetase family. As to quaternary structure, homodimer.

The catalysed reaction is deamido-NAD(+) + NH4(+) + ATP = AMP + diphosphate + NAD(+) + H(+). The protein operates within cofactor biosynthesis; NAD(+) biosynthesis; NAD(+) from deamido-NAD(+) (ammonia route): step 1/1. Its function is as follows. Catalyzes the ATP-dependent amidation of deamido-NAD to form NAD. Uses ammonia as a nitrogen source. In Burkholderia lata (strain ATCC 17760 / DSM 23089 / LMG 22485 / NCIMB 9086 / R18194 / 383), this protein is NH(3)-dependent NAD(+) synthetase.